Here is a 224-residue protein sequence, read N- to C-terminus: Adenylate kinase (224 aa).

Position 10–15 (10–15 (GSGKST)) interacts with ATP. Residues 30 to 59 (SSGDLIRREIERKSSLGREMEAYLSRGDLI) form an NMP region. AMP is bound by residues serine 31, arginine 36, 57–59 (DLI), 83–86 (GYPR), and glutamine 90. Residues 124–161 (GRRICPNCGAVYHVKYNPPKVPGICDVCGSELIQRADD) form an LID region. Arginine 125 is a binding site for ATP. Zn(2+) is bound by residues cysteine 128 and cysteine 131. 134–135 (VY) is an ATP binding site. Cysteine 148 and cysteine 151 together coordinate Zn(2+). The AMP site is built by arginine 158 and arginine 169. Residue glycine 197 coordinates ATP.

It belongs to the adenylate kinase family. As to quaternary structure, monomer.

The protein resides in the cytoplasm. The catalysed reaction is AMP + ATP = 2 ADP. It participates in purine metabolism; AMP biosynthesis via salvage pathway; AMP from ADP: step 1/1. In terms of biological role, catalyzes the reversible transfer of the terminal phosphate group between ATP and AMP. Plays an important role in cellular energy homeostasis and in adenine nucleotide metabolism. The protein is Adenylate kinase of Thermococcus kodakarensis (strain ATCC BAA-918 / JCM 12380 / KOD1) (Pyrococcus kodakaraensis (strain KOD1)).